Reading from the N-terminus, the 345-residue chain is NADH-ubiquinone oxidoreductase chain 2 (345 aa).

9 helical membrane-spanning segments follow: residues 25–45, 60–80, 99–119, 149–171, 178–198, 199–219, 242–262, 282–302, and 324–344; these read HWLL…PLMT, FLTQ…NAWL, TIAI…PEVL, LNTP…GGLN, ILAF…PFSP, QLMI…FLVL, ALSL…GFVP, LALS…IVTL, and LLLS…PLTL.

The protein belongs to the complex I subunit 2 family. Core subunit of respiratory chain NADH dehydrogenase (Complex I) which is composed of 45 different subunits.

It is found in the mitochondrion inner membrane. It catalyses the reaction a ubiquinone + NADH + 5 H(+)(in) = a ubiquinol + NAD(+) + 4 H(+)(out). In terms of biological role, core subunit of the mitochondrial membrane respiratory chain NADH dehydrogenase (Complex I) which catalyzes electron transfer from NADH through the respiratory chain, using ubiquinone as an electron acceptor. Essential for the catalytic activity and assembly of complex I. This chain is NADH-ubiquinone oxidoreductase chain 2 (mt-nd2), found in Xenopus laevis (African clawed frog).